A 1747-amino-acid polypeptide reads, in one-letter code: Retroelement silencing factor 1 (1747 aa).

Residue lysine 216 forms a Glycyl lysine isopeptide (Lys-Gly) (interchain with G-Cter in SUMO2) linkage. A Phosphoserine modification is found at serine 221. Over residues 261–272 (TSAVPSQQYATQ) the composition is skewed to polar residues. The tract at residues 261-280 (TSAVPSQQYATQTDKRPPPP) is disordered. Lysine 707 is covalently cross-linked (Glycyl lysine isopeptide (Lys-Gly) (interchain with G-Cter in SUMO2)). 3 disordered regions span residues 833–856 (PLTQKEKQNESTNGNSEVTPNVNQ), 923–956 (PQKPSLPNQQGIGSREPEKQLDNTTENKDFGFQK), and 1073–1101 (EGSVGQQTTYQTSEDQTADKTSSDSKDPA). Residues 842 to 856 (ESTNGNSEVTPNVNQ) show a composition bias toward polar residues. Positions 937–956 (REPEKQLDNTTENKDFGFQK) are enriched in basic and acidic residues. Over residues 1073–1087 (EGSVGQQTTYQTSED) the composition is skewed to polar residues. Positions 1089–1101 (TADKTSSDSKDPA) are enriched in basic and acidic residues. Lysine 1136 is covalently cross-linked (Glycyl lysine isopeptide (Lys-Gly) (interchain with G-Cter in SUMO2)). The residue at position 1145 (serine 1145) is a Phosphoserine. The tract at residues 1200–1274 (EEKQKEQCSP…KSLPRTEQEL (75 aa)) is disordered. A compositionally biased stretch (basic and acidic residues) spans 1217–1226 (QGERTSDRDV). Threonine 1240 carries the phosphothreonine modification. Over residues 1242–1261 (PDGKSHFPELQDDSRKDTPK) the composition is skewed to basic and acidic residues. At serine 1358 the chain carries Phosphoserine. Glycyl lysine isopeptide (Lys-Gly) (interchain with G-Cter in SUMO2) cross-links involve residues lysine 1528 and lysine 1636. Residues 1686–1716 (KRTQKDSQERDNVNSRLSKRSFSADGFEMLQ) form a disordered region. Basic and acidic residues predominate over residues 1689–1698 (QKDSQERDNV). Phosphoserine is present on serine 1708. Lysine 1723 participates in a covalent cross-link: Glycyl lysine isopeptide (Lys-Gly) (interchain with G-Cter in SUMO2). The residue at position 1740 (serine 1740) is a Phosphoserine.

Interacts with SETDB1.

Its subcellular location is the nucleus. Plays a role in the regulation of imprinted gene expression, regulates repressive epigenetic modifications associated with SETDB1. Required for the recruitment or accumulation of SETDB1 to the endogenous retroviruses (ERVs) and maintenance of repressive chromatin configuration, contributing to a subset of the SETDB1-dependent ERV silencing in embryonic stem cells. In Homo sapiens (Human), this protein is Retroelement silencing factor 1.